Here is a 915-residue protein sequence, read N- to C-terminus: Protein O-mannosyl-transferase TMTC3 (915 aa).

Residues methionine 1–glutamate 8 are Cytoplasmic-facing. The helical transmembrane segment at isoleucine 9 to valine 29 threads the bilayer. At phenylalanine 30–histidine 93 the chain is on the extracellular side. A helical membrane pass occupies residues leucine 94–phenylalanine 114. At leucine 115–serine 120 the chain is on the cytoplasmic side. The next 2 helical transmembrane spans lie at valine 121–glycine 139 and valine 140–serine 158. Topologically, residues tyrosine 159–aspartate 166 are cytoplasmic. A helical membrane pass occupies residues asparagine 167–cysteine 187. Residues lysine 188–threonine 193 are Extracellular-facing. A helical transmembrane segment spans residues valine 194–leucine 214. Residues cysteine 215–serine 231 are Cytoplasmic-facing. Residues methionine 232 to isoleucine 252 form a helical membrane-spanning segment. Over arginine 253–aspartate 317 the chain is Extracellular. Residues isoleucine 318–isoleucine 338 form a helical membrane-spanning segment. The Cytoplasmic segment spans residues arginine 339 to cysteine 353. The chain crosses the membrane as a helical span at residues leucine 354–alanine 374. Over glutamate 375–arginine 376 the chain is Extracellular. Residues valine 377 to serine 397 traverse the membrane as a helical segment. Topologically, residues threonine 398–lysine 404 are cytoplasmic. The helical transmembrane segment at leucine 405–histidine 423 threads the bilayer. Over arginine 424–glutamate 915 the chain is Extracellular. TPR repeat units lie at residues alanine 446 to aspartate 479, isoleucine 480 to isoleucine 513, asparagine 529 to phenylalanine 562, lysine 563 to asparagine 596, alanine 597 to histidine 631, alanine 669 to phenylalanine 702, arginine 703 to histidine 736, lysine 738 to asparagine 771, and valine 772 to glutamate 805. N-linked (GlcNAc...) asparagine glycosylation is present at asparagine 494. At tyrosine 503 the chain carries Phosphotyrosine. The N-linked (GlcNAc...) asparagine glycan is linked to asparagine 541. A disordered region spans residues lysine 848–lysine 892. The N-linked (GlcNAc...) asparagine glycan is linked to asparagine 865. Positions asparagine 865–glutamine 874 are enriched in low complexity. Basic and acidic residues predominate over residues asparagine 878–lysine 892.

The protein belongs to the TMTC family.

It localises to the membrane. The protein localises to the endoplasmic reticulum. The catalysed reaction is a di-trans,poly-cis-dolichyl beta-D-mannosyl phosphate + L-seryl-[protein] = 3-O-(alpha-D-mannosyl)-L-seryl-[protein] + a di-trans,poly-cis-dolichyl phosphate + H(+). It carries out the reaction a di-trans,poly-cis-dolichyl beta-D-mannosyl phosphate + L-threonyl-[protein] = 3-O-(alpha-D-mannosyl)-L-threonyl-[protein] + a di-trans,poly-cis-dolichyl phosphate + H(+). The protein operates within protein modification; protein glycosylation. In terms of biological role, transfers mannosyl residues to the hydroxyl group of serine or threonine residues. The 4 members of the TMTC family are O-mannosyl-transferases dedicated primarily to the cadherin superfamily, each member seems to have a distinct role in decorating the cadherin domains with O-linked mannose glycans at specific regions. Also acts as O-mannosyl-transferase on other proteins such as PDIA3. Involved in the positive regulation of proteasomal protein degradation in the endoplasmic reticulum (ER), and the control of ER stress response. The protein is Protein O-mannosyl-transferase TMTC3 of Homo sapiens (Human).